The chain runs to 37 residues: Large ribosomal subunit protein bL36 (37 aa).

The protein belongs to the bacterial ribosomal protein bL36 family.

The protein is Large ribosomal subunit protein bL36 of Leptospira biflexa serovar Patoc (strain Patoc 1 / Ames).